Here is a 179-residue protein sequence, read N- to C-terminus: Large ribosomal subunit protein bL25 (179 aa).

It belongs to the bacterial ribosomal protein bL25 family. CTC subfamily. Part of the 50S ribosomal subunit; part of the 5S rRNA/L5/L18/L25 subcomplex. Contacts the 5S rRNA. Binds to the 5S rRNA independently of L5 and L18.

Functionally, this is one of the proteins that binds to the 5S RNA in the ribosome where it forms part of the central protuberance. The protein is Large ribosomal subunit protein bL25 of Desulfitobacterium hafniense (strain DSM 10664 / DCB-2).